A 250-amino-acid chain; its full sequence is 3-deoxy-manno-octulosonate cytidylyltransferase (250 aa).

It belongs to the KdsB family.

It localises to the cytoplasm. It carries out the reaction 3-deoxy-alpha-D-manno-oct-2-ulosonate + CTP = CMP-3-deoxy-beta-D-manno-octulosonate + diphosphate. It functions in the pathway nucleotide-sugar biosynthesis; CMP-3-deoxy-D-manno-octulosonate biosynthesis; CMP-3-deoxy-D-manno-octulosonate from 3-deoxy-D-manno-octulosonate and CTP: step 1/1. The protein operates within bacterial outer membrane biogenesis; lipopolysaccharide biosynthesis. Activates KDO (a required 8-carbon sugar) for incorporation into bacterial lipopolysaccharide in Gram-negative bacteria. This is 3-deoxy-manno-octulosonate cytidylyltransferase from Syntrophotalea carbinolica (strain DSM 2380 / NBRC 103641 / GraBd1) (Pelobacter carbinolicus).